The primary structure comprises 275 residues: Putative pyruvate, phosphate dikinase regulatory protein (275 aa).

An ADP-binding site is contributed by 149-156 (GVSRTSKT).

This sequence belongs to the pyruvate, phosphate/water dikinase regulatory protein family. PDRP subfamily.

The catalysed reaction is N(tele)-phospho-L-histidyl/L-threonyl-[pyruvate, phosphate dikinase] + ADP = N(tele)-phospho-L-histidyl/O-phospho-L-threonyl-[pyruvate, phosphate dikinase] + AMP + H(+). It carries out the reaction N(tele)-phospho-L-histidyl/O-phospho-L-threonyl-[pyruvate, phosphate dikinase] + phosphate + H(+) = N(tele)-phospho-L-histidyl/L-threonyl-[pyruvate, phosphate dikinase] + diphosphate. Bifunctional serine/threonine kinase and phosphorylase involved in the regulation of the pyruvate, phosphate dikinase (PPDK) by catalyzing its phosphorylation/dephosphorylation. This is Putative pyruvate, phosphate dikinase regulatory protein from Levilactobacillus brevis (strain ATCC 367 / BCRC 12310 / CIP 105137 / JCM 1170 / LMG 11437 / NCIMB 947 / NCTC 947) (Lactobacillus brevis).